The sequence spans 268 residues: CCAAT/enhancer-binding protein delta (268 aa).

3 disordered regions span residues 1–48 (MSAA…LGST), 97–132 (GLELLQGGPTRPPGVGSVARGPLKREPDWGDGDAPG), and 152–219 (AAQP…NQEM). S2 is modified (N-acetylserine). K120 is covalently cross-linked (Glycyl lysine isopeptide (Lys-Gly) (interchain with G-Cter in SUMO)). Pro residues predominate over residues 155-167 (PTPPTSPEPPRGS). Residues 177 to 201 (VREKGAGKRGPDRGSPEYRQRRERN) are compositionally biased toward basic and acidic residues. The bZIP domain maps to 191-254 (SPEYRQRRER…AGLRQFFKKL (64 aa)). The basic motif stretch occupies residues 195–222 (RQRRERNNIAVRKSRDKAKRRNQEMQQK). Residues 226–254 (LSAENEKLHQRVEQLTRDLAGLRQFFKKL) are leucine-zipper.

Belongs to the bZIP family. C/EBP subfamily. Binds DNA as a homodimer and as a heterodimer. Can form stable heterodimers with CEBPA, CEBPB and CEBPE. Directly interacts with SPI1/PU.1; this interaction does not affect DNA-binding properties of each partner. Interacts with PRDM16.

It is found in the nucleus. Its function is as follows. Transcription activator that recognizes two different DNA motifs: the CCAAT homology common to many promoters and the enhanced core homology common to many enhancers. Important transcription factor regulating the expression of genes involved in immune and inflammatory responses. Transcriptional activator that enhances IL6 transcription alone and as heterodimer with CEBPB. This is CCAAT/enhancer-binding protein delta (Cebpd) from Mus musculus (Mouse).